The sequence spans 255 residues: CDP-diacylglycerol pyrophosphatase (255 aa).

A helical membrane pass occupies residues Leu5–Phe27.

It belongs to the Cdh family.

The protein resides in the cell inner membrane. The enzyme catalyses a CDP-1,2-diacyl-sn-glycerol + H2O = a 1,2-diacyl-sn-glycero-3-phosphate + CMP + 2 H(+). It participates in phospholipid metabolism; CDP-diacylglycerol degradation; phosphatidate from CDP-diacylglycerol: step 1/1. The chain is CDP-diacylglycerol pyrophosphatase from Cronobacter sakazakii (strain ATCC BAA-894) (Enterobacter sakazakii).